Reading from the N-terminus, the 164-residue chain is HTH-type transcriptional regulator IscR (164 aa).

The 130-residue stretch at 2–131 folds into the HTH rrf2-type domain; the sequence is RLTSKGRYAV…NNITLGELVN (130 aa). Positions 28–51 form a DNA-binding region, H-T-H motif; the sequence is LADISERQGISLSYLEQLFSRLRK. The [2Fe-2S] cluster site is built by Cys-92, Cys-98, and Cys-104.

It depends on [2Fe-2S] cluster as a cofactor.

Functionally, regulates the transcription of several operons and genes involved in the biogenesis of Fe-S clusters and Fe-S-containing proteins. The polypeptide is HTH-type transcriptional regulator IscR (Salmonella choleraesuis (strain SC-B67)).